A 118-amino-acid chain; its full sequence is Small ribosomal subunit protein uS13 (118 aa).

It belongs to the universal ribosomal protein uS13 family. Part of the 30S ribosomal subunit. Forms a loose heterodimer with protein S19. Forms two bridges to the 50S subunit in the 70S ribosome.

Its function is as follows. Located at the top of the head of the 30S subunit, it contacts several helices of the 16S rRNA. In the 70S ribosome it contacts the 23S rRNA (bridge B1a) and protein L5 of the 50S subunit (bridge B1b), connecting the 2 subunits; these bridges are implicated in subunit movement. Contacts the tRNAs in the A and P-sites. The protein is Small ribosomal subunit protein uS13 of Carsonella ruddii (strain PV).